Consider the following 447-residue polypeptide: Phosphoglucosamine mutase (447 aa).

The active-site Phosphoserine intermediate is the serine 101. Serine 101, aspartate 242, aspartate 244, and aspartate 246 together coordinate Mg(2+). Position 101 is a phosphoserine (serine 101).

Belongs to the phosphohexose mutase family. Requires Mg(2+) as cofactor. In terms of processing, activated by phosphorylation.

The enzyme catalyses alpha-D-glucosamine 1-phosphate = D-glucosamine 6-phosphate. Its function is as follows. Catalyzes the conversion of glucosamine-6-phosphate to glucosamine-1-phosphate. The chain is Phosphoglucosamine mutase from Xanthobacter autotrophicus (strain ATCC BAA-1158 / Py2).